A 130-amino-acid chain; its full sequence is uncharacterized protein (130 aa).

Asparagine 102 is a glycosylation site (N-linked (GlcNAc...) asparagine). The chain crosses the membrane as a helical span at residues 110-130 (DPLAFYLMFLIIITILLIMIL).

It is found in the membrane. This is an uncharacterized protein from Dictyostelium discoideum (Social amoeba).